A 284-amino-acid chain; its full sequence is 1D-myo-inositol 2-acetamido-2-deoxy-alpha-D-glucopyranoside deacetylase (284 aa).

Histidine 12, aspartate 15, and histidine 146 together coordinate Zn(2+).

The protein belongs to the MshB deacetylase family. Zn(2+) serves as cofactor.

It carries out the reaction 1D-myo-inositol 2-acetamido-2-deoxy-alpha-D-glucopyranoside + H2O = 1D-myo-inositol 2-amino-2-deoxy-alpha-D-glucopyranoside + acetate. Catalyzes the deacetylation of 1D-myo-inositol 2-acetamido-2-deoxy-alpha-D-glucopyranoside (GlcNAc-Ins) in the mycothiol biosynthesis pathway. The sequence is that of 1D-myo-inositol 2-acetamido-2-deoxy-alpha-D-glucopyranoside deacetylase from Mycolicibacterium vanbaalenii (strain DSM 7251 / JCM 13017 / BCRC 16820 / KCTC 9966 / NRRL B-24157 / PYR-1) (Mycobacterium vanbaalenii).